The sequence spans 341 residues: Homeobox protein knotted-1-like 8 (341 aa).

The segment covering Met-1–Ala-17 has biased composition (low complexity). Disordered stretches follow at residues Met-1–Gly-72, Ala-121–Asp-148, and Ala-187–Gln-207. Positions Ala-187–Ser-196 are enriched in polar residues. The ELK domain occupies Gln-207–Phe-227. The homeobox; TALE-type DNA-binding region spans Ser-228–Thr-291.

It belongs to the TALE/KNOX homeobox family.

It is found in the nucleus. Its function is as follows. Probable transcription factor that may be involved in shoot formation during embryogenesis. This Oryza sativa subsp. japonica (Rice) protein is Homeobox protein knotted-1-like 8 (OSH43).